The sequence spans 268 residues: uncharacterized protein (268 aa).

Belongs to the glycosyltransferase 2 family.

This is an uncharacterized protein from Bacillus subtilis (strain 168).